A 172-amino-acid polypeptide reads, in one-letter code: 3-hydroxydecanoyl-[acyl-carrier-protein] dehydratase (172 aa).

Residue H71 is part of the active site.

It belongs to the thioester dehydratase family. FabA subfamily. Homodimer.

The protein localises to the cytoplasm. It carries out the reaction a (3R)-hydroxyacyl-[ACP] = a (2E)-enoyl-[ACP] + H2O. The enzyme catalyses (3R)-hydroxydecanoyl-[ACP] = (2E)-decenoyl-[ACP] + H2O. It catalyses the reaction (2E)-decenoyl-[ACP] = (3Z)-decenoyl-[ACP]. It functions in the pathway lipid metabolism; fatty acid biosynthesis. Necessary for the introduction of cis unsaturation into fatty acids. Catalyzes the dehydration of (3R)-3-hydroxydecanoyl-ACP to E-(2)-decenoyl-ACP and then its isomerization to Z-(3)-decenoyl-ACP. Can catalyze the dehydratase reaction for beta-hydroxyacyl-ACPs with saturated chain lengths up to 16:0, being most active on intermediate chain length. The chain is 3-hydroxydecanoyl-[acyl-carrier-protein] dehydratase from Cronobacter sakazakii (strain ATCC BAA-894) (Enterobacter sakazakii).